A 359-amino-acid polypeptide reads, in one-letter code: DNA integrity scanning protein DisA (359 aa).

Residues 7–146 (DDIFRATLAA…GRRYVLDGSA (140 aa)) form the DAC domain. Residues G74, L92, and 105–109 (TRHRT) each bind ATP.

It belongs to the DisA family. As to quaternary structure, homooctamer. Mg(2+) serves as cofactor.

It catalyses the reaction 2 ATP = 3',3'-c-di-AMP + 2 diphosphate. Its function is as follows. Participates in a DNA-damage check-point that is active prior to asymmetric division when DNA is damaged. DisA forms globular foci that rapidly scan along the chromosomes during sporulation, searching for lesions. When a lesion is present, DisA pauses at the lesion site. This triggers a cellular response that culminates in a temporary block in sporulation initiation. In terms of biological role, also has diadenylate cyclase activity, catalyzing the condensation of 2 ATP molecules into cyclic di-AMP (c-di-AMP). c-di-AMP acts as a signaling molecule that couples DNA integrity with progression of sporulation. The rise in c-di-AMP level generated by DisA while scanning the chromosome, operates as a positive signal that advances sporulation; upon encountering a lesion, the DisA focus arrests at the damaged site and halts c-di-AMP synthesis. The protein is DNA integrity scanning protein DisA of Frankia alni (strain DSM 45986 / CECT 9034 / ACN14a).